The following is a 1237-amino-acid chain: Tyrosine-protein kinase sid-3 (1237 aa).

The 263-residue stretch at 107–369 folds into the Protein kinase domain; that stretch reads IKLYELIGEG…REDLVAAMFL (263 aa). ATP is bound by residues 113-121 and lysine 139; that span reads IGEGSFAVV. Aspartate 230 serves as the catalytic Proton acceptor. The SH3 domain maps to 366–426; that stretch reads AMFLDAVARE…PRSVVFAQTN (61 aa). Disordered stretches follow at residues 683–704, 741–802, 826–919, 940–986, 999–1018, and 1134–1156; these read NQGS…GIQN, PPAP…APVQ, IQPQ…EERR, SNST…SEPI, SATT…PSPP, and QQRQ…SAAS. Composition is skewed to polar residues over residues 749 to 766, 778 to 791, and 847 to 863; these read QPVS…TLQK, KRPT…SNGF, and SAPT…SQAS. Composition is skewed to low complexity over residues 881 to 910 and 940 to 961; these read TPIT…TSTT and SNST…PSTA. Residues 1138-1156 are compositionally biased toward low complexity; sequence AGSSSRAVPPASASTSAAS.

The protein belongs to the protein kinase superfamily. Tyr protein kinase family. SYK/ZAP-70 subfamily. Ubiquitously present in all tissues tested. Expressed in the somatic cells of gut, pharynx, body wall muscle, neurons, skin and excretory canal cells.

The protein resides in the cytoplasm. It carries out the reaction L-tyrosyl-[protein] + ATP = O-phospho-L-tyrosyl-[protein] + ADP + H(+). In terms of biological role, tyrosine-protein kinase which plays a role in RNA-mediated gene silencing by mediating import of double-stranded RNA (dsRNA) into cells. Not required for import of ingested dsRNA into intestinal cells but involved in subsequent export from intestinal cells to internal tissues. The sequence is that of Tyrosine-protein kinase sid-3 (sid-3) from Caenorhabditis elegans.